A 659-amino-acid polypeptide reads, in one-letter code: Protein NEDD1 (659 aa).

8 WD repeats span residues 1-31 (MQEN…FNPH), 32-71 (TAPH…PVPL), 75-114 (GEGQ…VHRS), 117-156 (DHKD…SSTP), 160-200 (GSNQ…PYHN), 204-244 (THKA…LVKT), 246-285 (VADA…SPIK), and 289-332 (AHKT…SAGG). At Thr-382 the chain carries Phosphothreonine; by PLK1. A disordered region spans residues 383-433 (LSKEAESGKNQDFSNFDDSGKSSLGDMFSPVRDDAVVSKGGDESIGKGDGL). Ser-411 carries the post-translational modification Phosphoserine. Residues 413-432 (VRDDAVVSKGGDESIGKGDG) show a composition bias toward basic and acidic residues. Residue Ser-426 is modified to Phosphoserine; by PLK1. Phosphoserine occurs at positions 468 and 515. Residues 508–522 (ETGNLNASPSSNQTR) are compositionally biased toward polar residues. The segment at 508 to 531 (ETGNLNASPSSNQTRSPEKFEKPE) is disordered. Residue Thr-549 is modified to Phosphothreonine; by CDK1. Residue Ser-636 is modified to Phosphoserine; by PLK1.

In terms of assembly, interacts with FAM29A. Interacts with HSPA1A and HSPA1B. Interacts with gamma-tubulin in a HSPA1A/B-dependent manner. In terms of processing, during mitosis, prior phosphorylation on Thr-549 by CDK1 promotes subsequent phosphorylation by PLK1 on Thr-382, Ser-426 and Ser-636. Phosphorylated NEDD1 can interact with gamma-tubulin for targeting the gamma-tubulin ring complex (gTuRC) to the centrosome, an important step for spindle formation.

It is found in the cytoplasm. The protein localises to the cytoskeleton. The protein resides in the microtubule organizing center. It localises to the centrosome. Required for mitosis progression. Promotes the nucleation of microtubules from the spindle. The chain is Protein NEDD1 (NEDD1) from Bos taurus (Bovine).